The chain runs to 260 residues: uncharacterized protein (260 aa).

The PNPLA domain occupies 8-166; sequence LALGSGGARG…VDRIPVSVVK (159 aa). The GXSXG signature appears at 39–43; it reads GSSMG. The Nucleophile role is filled by S41. D153 functions as the Proton acceptor in the catalytic mechanism. Positions 153 to 155 match the DGA/G motif; sequence DGA.

The protein belongs to the NTE family.

This is an uncharacterized protein from Bacillus subtilis (strain 168).